The chain runs to 258 residues: Spindlin-2B (258 aa).

The span at 1–23 (MKTPNAQEAEGQQTRAAAGRATG) shows a compositional bias: low complexity. Residues 1 to 49 (MKTPNAQEAEGQQTRAAAGRATGSANMTKKKVSQKKQRGRPSSQPRRNI) form a disordered region. Residues 28–39 (TKKKVSQKKQRG) are compositionally biased toward basic residues. Tudor-like domain regions lie at residues 50–99 (VGCR…LELH), 129–178 (IGKA…YQLL), and 210–255 (IGKH…YDLV). 2 histone H3K4me3 and H3R8me2a binding regions span residues E138 and 246–248 (DFH).

It belongs to the SPIN/STSY family. As to quaternary structure, interacts with C11orf84/SPINDOC. As to expression, detected in all the examined tissues with highest expression in liver, followed by heart, stomach, kidney, skeletal muscle, placenta, and pancreas.

It localises to the nucleus. In terms of biological role, involved in the regulation of cell cycle progression, this activity is related to the inhibition of apoptosis following the removal of essential growth factors. Exhibits H3K4me3-binding activity. The protein is Spindlin-2B (SPIN2B) of Homo sapiens (Human).